The sequence spans 292 residues: Large ribosomal subunit protein uL4 (292 aa).

2 stretches are compositionally biased toward basic and acidic residues: residues 1–33 (MVEV…DKTA) and 42–51 (KVSDKAESTP). Disordered stretches follow at residues 1–59 (MVEV…VKTS) and 132–158 (GTHK…TGKA).

Belongs to the universal ribosomal protein uL4 family. As to quaternary structure, part of the 50S ribosomal subunit.

Functionally, one of the primary rRNA binding proteins, this protein initially binds near the 5'-end of the 23S rRNA. It is important during the early stages of 50S assembly. It makes multiple contacts with different domains of the 23S rRNA in the assembled 50S subunit and ribosome. In terms of biological role, forms part of the polypeptide exit tunnel. The sequence is that of Large ribosomal subunit protein uL4 from Mycoplasmopsis pulmonis (strain UAB CTIP) (Mycoplasma pulmonis).